The primary structure comprises 426 residues: Histidine--tRNA ligase (426 aa).

This sequence belongs to the class-II aminoacyl-tRNA synthetase family. In terms of assembly, homodimer.

The protein resides in the cytoplasm. It catalyses the reaction tRNA(His) + L-histidine + ATP = L-histidyl-tRNA(His) + AMP + diphosphate + H(+). The polypeptide is Histidine--tRNA ligase (Streptococcus pyogenes serotype M6 (strain ATCC BAA-946 / MGAS10394)).